The following is a 941-amino-acid chain: MDADKQLERQLEKELDEMPAEDLDDDAYDEYDLIVIPDQGKGSPQQGHSESPQQEEEHKSEELRQRSRPTWPPSSAGGDMTTIELISSDDEPSVEETEGGNAAGRGRARNDSSSSSDDVGVIEGSELESNSEVSSDSDSDSDNAGGGNQLERSYQELNALPSKKFAQMVSLIGIAFKLNDLEKIESSVLELQNLATVPAHVWLKYLKARLVVTQTDEERKAFEEQCAKALGYYYSIPLSEYVVNYLVDQGNVQNHVLWAKLLADYDVERPDFGDKLRSLISTITDENEAAAFVEMLQKHCVTWTCNVEQRQMIKSVVDKFKQHLDETTRGWDWSEQHKAHVYDVETLSLDDDLKNAVIRFIFERSVAKFPIVDVLWLSYIEFIQFEGVTVPENEDENEVTAEMVAKRAKRLGKGFLRNTELDLANRGVRSHPSVQLNHRFLDLMERSDFELAEVDEEIRLILQRIVTDMDMTVELHLDYLAYRIRNTNASDEQQVASLRAAFNHAWEELTVLYGDQADTRYEVLQLWAQVEYTQLGSPDNGREIWRQIMGYPGSSIRGLLWLNFAQMESEYNGGHGTRDVLRKALSQPVLENGLMVQEFFRRYERCYGTYESIAACQALDLPVEYVKPRSRIKPNSQSAYPRQQKLKPRQQQQQTNREPLNREQRRRQAHEQQQQQQQQQKHGIKKSRTEPSGGATSPPSKVKGPANAEAKESNFKYSPNMEINKIFVRNLHPACSKEELHELFSPFGTIKDVRLVHKLNKQFKGIAYVEFEKPGEAQRAVAGRDGCLFKGMNISVAISNPPPRGTSAVKPSVAPKRRVPTSLIPTTLVRQEVAAKKLRLLLPEPGDISSTSASVDVAIKREANGEEQKGDVQERDEQKGEEQKGEEQKGEEPKGEEQKGDDQIGEEQSGVEQKGDEKKEEEMPAAVPKSNDDFRKLFLKD.

Residues 1 to 13 are compositionally biased toward basic and acidic residues; that stretch reads MDADKQLERQLEK. The disordered stretch occupies residues 1-149; it reads MDADKQLERQ…DSDNAGGGNQ (149 aa). Acidic residues predominate over residues 14 to 32; the sequence is ELDEMPAEDLDDDAYDEYD. A compositionally biased stretch (polar residues) spans 42–52; it reads GSPQQGHSESP. Residue Ser43 is modified to Phosphoserine. Over residues 55-65 the composition is skewed to basic and acidic residues; it reads EEEHKSEELRQ. The span at 87 to 98 shows a compositional bias: acidic residues; it reads SSDDEPSVEETE. The segment covering 111-134 has biased composition (low complexity); it reads DSSSSSDDVGVIEGSELESNSEVS. Ser153 carries the post-translational modification Phosphoserine. The segment at 629–713 is disordered; sequence RSRIKPNSQS…GPANAEAKES (85 aa). Residues 671 to 680 are compositionally biased toward low complexity; the sequence is EQQQQQQQQQ. Residue Ser713 is modified to Phosphoserine. The residue at position 717 (Tyr717) is a Phosphotyrosine. Ser718 carries the phosphoserine modification. The 78-residue stretch at 724–801 folds into the RRM domain; that stretch reads NKIFVRNLHP…MNISVAISNP (78 aa). Basic and acidic residues-rich tracts occupy residues 862–902, 913–922, and 930–941; these read EANG…KGDD, QKGDEKKEEE, and SNDDFRKLFLKD. The tract at residues 862–941 is disordered; the sequence is EANGEEQKGD…DDFRKLFLKD (80 aa).

Its subcellular location is the cytoplasm. Its function is as follows. May be involved in gene regulation during development. Binds RNA. The chain is RNA-binding protein 4F from Drosophila melanogaster (Fruit fly).